The following is a 127-amino-acid chain: Methylglyoxal synthase (127 aa).

The MGS-like domain maps to 1–127 (MEKKIALIAH…IKGLESLILR (127 aa)). Substrate is bound by residues histidine 10, lysine 14, 36 to 39 (TGTT), and 56 to 57 (SG). Residue aspartate 62 is the Proton donor/acceptor of the active site. Residue histidine 89 coordinates substrate.

The protein belongs to the methylglyoxal synthase family.

It carries out the reaction dihydroxyacetone phosphate = methylglyoxal + phosphate. Its function is as follows. Catalyzes the formation of methylglyoxal from dihydroxyacetone phosphate. This Borreliella afzelii (strain PKo) (Borrelia afzelii) protein is Methylglyoxal synthase.